We begin with the raw amino-acid sequence, 64 residues long: Putative calcium channel toxin Tx758 (64 aa).

The signal sequence occupies residues 1-18; sequence MSTFVIVFLLLTAVLCHA. Residues 19 to 27 constitute a propeptide that is removed on maturation; the sequence is EPALDETAR. Cystine bridges form between cysteine 29/cysteine 43, cysteine 36/cysteine 49, and cysteine 42/cysteine 58.

This sequence belongs to the scorpion calcin-like family. In terms of tissue distribution, expressed by the venom gland.

It localises to the secreted. May increase intracellular calcium release through the activation of nuclear inositol 1,4,5-trisphosphate receptors (ITPR) of cardiomyocytes, thereby causing an increase in the contraction frequency of these cells. In Buthus israelis (Israeli scorpion), this protein is Putative calcium channel toxin Tx758.